The primary structure comprises 979 residues: Protein argonaute PNH1 (979 aa).

The segment at Met-1–Pro-95 is disordered. The span at Ala-54–Glu-67 shows a compositional bias: low complexity. Residues Gly-77 to Gly-86 are compositionally biased toward basic residues. A PAZ domain is found at Pro-333–Glu-446. In terms of domain architecture, Piwi spans Leu-620–Glu-941.

Belongs to the argonaute family. Ago subfamily.

It is found in the cytoplasm. Probably involved in the RNA silencing pathway. May bind to short RNAs such as microRNAs (miRNAs) or short interfering RNAs (siRNAs), and represses the translation of mRNAs which are complementary to them. Plays a role in the maintenance of the indeterminate state of the stem cells in the shoot apical meristem (SAM). Regulates leaf formation through vascular development and may be involved in determining the central domain of the leaf founder region. This chain is Protein argonaute PNH1 (PHN1), found in Oryza sativa subsp. japonica (Rice).